Reading from the N-terminus, the 132-residue chain is Pro-MCH 2 (132 aa).

The N-terminal stretch at 1–24 is a signal peptide; the sequence is MRDSVLSVIFALALFLECYTPSMA. Cysteine 120 and cysteine 129 are disulfide-bonded.

Belongs to the melanin-concentrating hormone family. As to expression, pituitary gland. Produced in neurons of lateral basal hypothalamus which project both to the brain and to the neural lobe of the pituitary gland from where MCH is released.

Its function is as follows. Plays a role in skin pigmentation by antagonizing the action of melanotropin alpha. Induces melanin concentration within the melanophores. May participate in the control of the hypothalamo-pituitary adrenal gland axis by inhibiting the release of ACTH. In Oncorhynchus keta (Chum salmon), this protein is Pro-MCH 2 (mch2).